A 74-amino-acid chain; its full sequence is U5-theraphotoxin-Cg1a (74 aa).

Residues 1–19 form the signal peptide; that stretch reads MNATIFALLLLLNLAMYNA. The propeptide occupies 20-39; the sequence is AEQSSETDMDDTLLIPENYR. 3 disulfide bridges follow: cysteine 42–cysteine 56, cysteine 49–cysteine 61, and cysteine 55–cysteine 71.

This sequence belongs to the neurotoxin 36 family. 01 subfamily. Expressed by the venom gland.

It localises to the secreted. Its function is as follows. Probable ion channel inhibitor. The polypeptide is U5-theraphotoxin-Cg1a (Chilobrachys guangxiensis (Chinese earth tiger tarantula)).